Reading from the N-terminus, the 220-residue chain is Uracil phosphoribosyltransferase 2 (220 aa).

77-80 (ARDI) is a GTP binding site. Residues Arg-87 and Arg-113 each contribute to the 5-phospho-alpha-D-ribose 1-diphosphate site. Arg-134 provides a ligand contact to GTP. Residues Asp-140 and 140–148 (DPLLATGNS) each bind 5-phospho-alpha-D-ribose 1-diphosphate. Tyr-204 serves as a coordination point for D-ribose 5-phosphate. Residues Val-205 and 210 to 212 (GDF) contribute to the uracil site. A 5-phospho-alpha-D-ribose 1-diphosphate-binding site is contributed by Asp-211.

Belongs to the UPRTase family. Requires Mg(2+) as cofactor.

The catalysed reaction is UMP + diphosphate = 5-phospho-alpha-D-ribose 1-diphosphate + uracil. The protein operates within pyrimidine metabolism; UMP biosynthesis via salvage pathway; UMP from uracil: step 1/1. With respect to regulation, allosterically activated by GTP. Functionally, catalyzes the conversion of uracil and 5-phospho-alpha-D-ribose 1-diphosphate (PRPP) to UMP and diphosphate. The sequence is that of Uracil phosphoribosyltransferase 2 from Schizosaccharomyces pombe (strain 972 / ATCC 24843) (Fission yeast).